The primary structure comprises 294 residues: Acetylglutamate kinase (294 aa).

Substrate-binding positions include 63-64 (GG), R85, and N188.

The protein belongs to the acetylglutamate kinase family. ArgB subfamily.

The protein resides in the cytoplasm. The catalysed reaction is N-acetyl-L-glutamate + ATP = N-acetyl-L-glutamyl 5-phosphate + ADP. It participates in amino-acid biosynthesis; L-arginine biosynthesis; N(2)-acetyl-L-ornithine from L-glutamate: step 2/4. In terms of biological role, catalyzes the ATP-dependent phosphorylation of N-acetyl-L-glutamate. In Methanococcus maripaludis (strain C7 / ATCC BAA-1331), this protein is Acetylglutamate kinase.